The sequence spans 238 residues: Protein-lysine N-methyltransferase efm4 (238 aa).

Belongs to the class I-like SAM-binding methyltransferase superfamily. EFM4 family.

Its subcellular location is the cytoplasm. It is found in the nucleus. In terms of biological role, S-adenosyl-L-methionine-dependent protein-lysine N-methyltransferase that mono- and dimethylates elongation factor 1-alpha at 'Lys-316'. May play a role in intracellular transport. This Schizosaccharomyces pombe (strain 972 / ATCC 24843) (Fission yeast) protein is Protein-lysine N-methyltransferase efm4.